The sequence spans 122 residues: Large ribosomal subunit protein uL14 (122 aa).

The protein belongs to the universal ribosomal protein uL14 family. In terms of assembly, part of the 50S ribosomal subunit. Forms a cluster with proteins L3 and L19. In the 70S ribosome, L14 and L19 interact and together make contacts with the 16S rRNA in bridges B5 and B8.

Its function is as follows. Binds to 23S rRNA. Forms part of two intersubunit bridges in the 70S ribosome. The protein is Large ribosomal subunit protein uL14 of Bacillus velezensis (strain DSM 23117 / BGSC 10A6 / LMG 26770 / FZB42) (Bacillus amyloliquefaciens subsp. plantarum).